The chain runs to 842 residues: Protein P (842 aa).

The terminal protein domain (TP) stretch occupies residues 1–177 (MPLSYQHFRR…FCGSPYSWEQ (177 aa)). Residues 178 to 345 (ELHHGAFLDG…YCLTHLVNLL (168 aa)) are spacer. A disordered region spans residues 186–273 (DGPSRMGEES…AKNIASRSAS (88 aa)). The segment covering 223–239 (GPQSQQRPLDGSQQGRS) has biased composition (polar residues). The polymerase/reverse transcriptase domain (RT) stretch occupies residues 346–689 (EDWGPCTEHG…YLNLYPVARQ (344 aa)). In terms of domain architecture, Reverse transcriptase spans 356-599 (RHHIRIPRTP…YSLNFMGYVI (244 aa)). Positions 428, 550, and 551 each coordinate Mg(2+).

Belongs to the hepadnaviridae P protein family.

The enzyme catalyses DNA(n) + a 2'-deoxyribonucleoside 5'-triphosphate = DNA(n+1) + diphosphate. It catalyses the reaction Endonucleolytic cleavage to 5'-phosphomonoester.. Its activity is regulated as follows. Activated by host HSP70 and HSP40 in vitro to be able to bind the epsilon loop of the pgRNA. Because deletion of the RNase H region renders the protein partly chaperone-independent, the chaperones may be needed indirectly to relieve occlusion of the RNA-binding site by this domain. Inhibited by several reverse-transcriptase inhibitors: Lamivudine, Adefovir and Entecavir. Multifunctional enzyme that converts the viral RNA genome into dsDNA in viral cytoplasmic capsids. This enzyme displays a DNA polymerase activity that can copy either DNA or RNA templates, and a ribonuclease H (RNase H) activity that cleaves the RNA strand of RNA-DNA heteroduplexes in a partially processive 3'- to 5'-endonucleasic mode. Neo-synthesized pregenomic RNA (pgRNA) are encapsidated together with the P protein, and reverse-transcribed inside the nucleocapsid. Initiation of reverse-transcription occurs first by binding the epsilon loop on the pgRNA genome, and is initiated by protein priming, thereby the 5'-end of (-)DNA is covalently linked to P protein. Partial (+)DNA is synthesized from the (-)DNA template and generates the relaxed circular DNA (RC-DNA) genome. After budding and infection, the RC-DNA migrates in the nucleus, and is converted into a plasmid-like covalently closed circular DNA (cccDNA). The activity of P protein does not seem to be necessary for cccDNA generation, and is presumably released from (+)DNA by host nuclear DNA repair machinery. The polypeptide is Protein P (Homo sapiens (Human)).